The primary structure comprises 1021 residues: Sodium/potassium-transporting ATPase subunit alpha-1 (1021 aa).

Positions 1-5 (MGKGG) are excised as a propeptide. Over residues 1–11 (MGKGGGRDKYE) the composition is skewed to basic and acidic residues. The interval 1–37 (MGKGGGRDKYEPAAISEHGNKKKAKKERDMDELKKEV) is disordered. Residues 6 to 85 (GRDKYEPAAI…NALTPPPTTP (80 aa)) lie on the Cytoplasmic side of the membrane. N6-acetyllysine is present on Lys-9. Tyr-10 carries the post-translational modification Phosphotyrosine. Ser-16 bears the Phosphoserine; by PKC mark. Lys-21 is subject to N6-acetyllysine. The segment covering 26-37 (KERDMDELKKEV) has biased composition (basic and acidic residues). Phosphoserine is present on residues Ser-38 and Ser-45. The interval 80 to 82 (PPP) is phosphoinositide-3 kinase binding. Residues 86–106 (EWVKFCRQLFGGFSMLLWIGA) form a helical membrane-spanning segment. The Extracellular portion of the chain corresponds to 107-129 (ILCFLAYGIQAATEEEPQNDNLY). A helical transmembrane segment spans residues 130–150 (LGVVLSAVVIITGCFSYYQEA). Residues 151-286 (KSSKIMESFK…GGQTPIAAEI (136 aa)) are Cytoplasmic-facing. A disordered region spans residues 214–233 (SSLTGESEPQTRSPDFTNEN). A Phosphoserine modification is found at Ser-226. Tyr-258 is subject to Phosphotyrosine. The chain crosses the membrane as a helical span at residues 287 to 306 (EHFIHIITGVAVFLGVTFFI). Residues 307–318 (LSLILEYTWLEA) lie on the Extracellular side of the membrane. A helical transmembrane segment spans residues 319–336 (VIFLIGIIVANVPEGLLA). Over 337 to 770 (TVTVCLTLTA…EEGRLIFDNL (434 aa)) the chain is Cytoplasmic. The active-site 4-aspartylphosphate intermediate is Asp-374. Phosphoserine is present on residues Ser-450 and Ser-482. Residue Lys-485 participates in ATP binding. Tyr-540 bears the Phosphotyrosine mark. Positions 594–715 (RAAVPDAVGK…QGAIVAVTGD (122 aa)) are mediates interaction with SCN7A. Lys-659 bears the N6-succinyllysine mark. Ser-666 carries the phosphoserine modification. Residues Asp-715 and Asp-719 each contribute to the Mg(2+) site. A helical transmembrane segment spans residues 771-790 (KKSIAYTLTSNIPEITPFLI). Over 791–800 (FIIANIPLPL) the chain is Extracellular. The chain crosses the membrane as a helical span at residues 801 to 821 (GTVTILCIDLGTDMVPAISLA). Residues 822 to 841 (YEQAESDIMKRQPRNPQTDK) are Cytoplasmic-facing. A helical transmembrane segment spans residues 842–864 (LVNERLISMAYGQIGMIQALGGF). At 865 to 916 (FTYFVILAENGFLPIHLLGLRVDWDDRWVNDVEDSYGQQWTYEQRKIVEFTC) the chain is on the extracellular side. A helical membrane pass occupies residues 917-936 (HTAFFVSIVVVQWADLVICK). The Cytoplasmic portion of the chain corresponds to 937–949 (TRRNSVFQQGMKN). Position 941 is a phosphoserine; by PKA (Ser-941). The chain crosses the membrane as a helical span at residues 950 to 968 (KILIFGLFEETALAAFLSY). The Extracellular portion of the chain corresponds to 969 to 983 (CPGMGVALRMYPLKP). Residues 984 to 1004 (TWWFCAFPYSLLIFVYDEVRK) traverse the membrane as a helical segment. Residues 1005 to 1021 (LIIRRRPGGWVEKETYY) are Cytoplasmic-facing.

The protein belongs to the cation transport ATPase (P-type) (TC 3.A.3) family. Type IIC subfamily. As to quaternary structure, the sodium/potassium-transporting ATPase is composed of a catalytic alpha subunit, an auxiliary non-catalytic beta subunit and an additional regulatory subunit. Interacts with regulatory subunit FXYD1. Interacts with regulatory subunit FXYD3. Interacts with SIK1. Interacts with SLC35G1 and STIM1. Interacts with CLN3; this interaction regulates the sodium/potassium-transporting ATPase complex localization at the plasma membrane. Interacts with SCN7A; activates ATP1A1 P-type sodium:potassium-exchanging transporter activity which indirectly signals to nearby neurons to regulate sodium homeostasis. In terms of processing, phosphorylation on Tyr-10 modulates pumping activity. Phosphorylation of Ser-941 by PKA modulates the response of ATP1A1 to PKC. Dephosphorylation by protein phosphatase 2A (PP2A) following increases in intracellular sodium, leading to increase catalytic activity.

The protein localises to the cell membrane. Its subcellular location is the basolateral cell membrane. The protein resides in the sarcolemma. It is found in the cell projection. It localises to the axon. The protein localises to the melanosome. It catalyses the reaction K(+)(out) + Na(+)(in) + ATP + H2O = K(+)(in) + Na(+)(out) + ADP + phosphate + H(+). In terms of biological role, this is the catalytic component of the active enzyme, which catalyzes the hydrolysis of ATP coupled with the exchange of sodium and potassium ions across the plasma membrane. This action creates the electrochemical gradient of sodium and potassium ions, providing the energy for active transport of various nutrients. Could also be part of an osmosensory signaling pathway that senses body-fluid sodium levels and controls salt intake behavior as well as voluntary water intake to regulate sodium homeostasis. The protein is Sodium/potassium-transporting ATPase subunit alpha-1 (ATP1A1) of Equus caballus (Horse).